The chain runs to 264 residues: Glutamate racemase (264 aa).

Substrate-binding positions include 10–11 and 42–43; these read DS and YG. Cys-73 acts as the Proton donor/acceptor in catalysis. A substrate-binding site is contributed by 74 to 75; sequence NT. Cys-183 serves as the catalytic Proton donor/acceptor. 184 to 185 contributes to the substrate binding site; sequence TH.

The protein belongs to the aspartate/glutamate racemases family.

It catalyses the reaction L-glutamate = D-glutamate. It functions in the pathway cell wall biogenesis; peptidoglycan biosynthesis. Functionally, provides the (R)-glutamate required for cell wall biosynthesis. This chain is Glutamate racemase, found in Streptococcus equi subsp. zooepidemicus (strain H70).